A 1250-amino-acid polypeptide reads, in one-letter code: MQPWQCLRRFALAWWERTAEGRARSPREEVGPRDPGGRGEPDPERSSPPMLSADDAEYPREYRTLGGGGGGGSGGRRFSNVGLVHTSERRHTVIAAQSLEALSGLQKADADRKRDAFMDHLKSKYPQHALALRGQQDRMREQVGGWTVDPVCLLSSLCSHLHGDSTPSGAGQPAQQPNYWSFKTRSSRHTQGAQPGLADQAAKLSYASAESLETMSEAELPLGFSRMNRFRQSLPLSRSASQTKLRSPGVLFLQFGEETRRVHITHEVSSLDTLHALIAHMFPQKLTMGMLKSPNTAILIKDEARNVFYELEDVRDIQDRSIIKIYRKEPLYAAFPGSHLTNGDLRREMVYASRESSPTRRLNNLSPASHLASSSPPPGLPSGLPSGLPSGSPSRSRLSYAGGRPPSYAGSPVHHAAERLGGAPTGQGVSPSPSAILERRDVKPDEDLAGKAGGMVLVKGEGLYADPYGLLHEGRLSLAAAAETHSHTRARAACTSGVPCALSAPTPLPRCSPTWRTRCTRRALAALYGDGYGFRLPPSSPQKLADVSAPSGGPPPPHSPYSGPPSRGSPVRQSFRKDSGSSSVFAESPGGKARSTGSASTAGAPPSELFPGPGERSLVGFGPPVPAKDTETRERMEAMEKQIASLTGLVQSALLRGSEPETPSEKVEGSNGAATPSAPVCGSGSKSSGATPVSGPPPPSASSTPAGQPTAVSRLQMQLHLRGLQNSASDLRGQLQQLRNVQLQNQESVRALLKPTEADVSMRVSEAARRQEDPLQRQRTLVEEERLRYLNDEELITQQLNDLEKSVEKIQRDVAHNHRLMPGPELEEKALVLKQLGETLTELKAHFPGLQSKMRVVLRVEVEAVKFLKEEPQRLDGLLKRCRGVTDTLAQIRRQVDEGMWPPPNNLLNQSPKKVAAETDFSKGLDFEIPPPSPPLNLHELSGPAEGTPLTPKSTNPTKCLDASSKRNTDKAVSVEAAERDWEEKRAALTQYSAKDINRLLEETQAELLKAIPDLDCASKTHPGPAPTPDHKPPKAPHGQKAAPRTEPSGRRGSDELTVPRYRTEKPSKSPPPPPPRRSFPSSHGLTTTRTGEVVVTSKKDSVFIKKAESEELEVQKPQVKLRRAVSEVVRPASTPPIMASAIKDEDDEERIIAELESGGSSVPPMKVVTPGASRLKAAQGPAGSPDKGKHGKQRTEYMRIQAQQQATKPSKEVSGPNETSSPGSEKPSGSRTSIPVLTSFGARNSSISF.

Residues 19 to 45 (AEGRARSPREEVGPRDPGGRGEPDPER) show a composition bias toward basic and acidic residues. The tract at residues 19–78 (AEGRARSPREEVGPRDPGGRGEPDPERSSPPMLSADDAEYPREYRTLGGGGGGGSGGRRF) is disordered. Phosphoserine is present on residues Ser47 and Ser52. Residues 65 to 75 (LGGGGGGGSGG) are compositionally biased toward gly residues. The residue at position 79 (Ser79) is a Phosphoserine. At Thr86 the chain carries Phosphothreonine. 7 positions are modified to phosphoserine: Ser87, Ser98, Ser211, Ser233, Ser237, Ser247, and Ser293. Tyr309 is modified (phosphotyrosine). Residues 352 to 448 (ASRESSPTRR…RRDVKPDEDL (97 aa)) form a disordered region. Over residues 354 to 364 (RESSPTRRLNN) the composition is skewed to polar residues. Low complexity predominate over residues 365 to 374 (LSPASHLASS). Residues Ser366, Ser375, and Ser392 each carry the phosphoserine modification. Positions 381 to 399 (PSGLPSGLPSGSPSRSRLS) are enriched in low complexity. 2 positions are modified to omega-N-methylarginine: Arg397 and Arg404. Phosphoserine occurs at positions 411, 430, and 432. Residues 437–448 (LERRDVKPDEDL) show a composition bias toward basic and acidic residues. A Phosphotyrosine modification is found at Tyr464. Positions 538–710 (PSSPQKLADV…ASSTPAGQPT (173 aa)) are disordered. Over residues 552–563 (GGPPPPHSPYSG) the composition is skewed to pro residues. Phosphoserine is present on residues Ser559, Ser562, and Ser566. Arg567 carries the post-translational modification Omega-N-methylarginine. 5 positions are modified to phosphoserine: Ser569, Ser579, Ser581, Ser583, and Ser588. The segment covering 590–607 (GGKARSTGSASTAGAPPS) has biased composition (low complexity). Residues 628-640 (KDTETRERMEAME) are compositionally biased toward basic and acidic residues. Phosphoserine is present on residues Ser664 and Ser688. Thr691 and Thr704 each carry phosphothreonine. Over residues 701 to 710 (ASSTPAGQPT) the composition is skewed to low complexity. Coiled coils occupy residues 712–753 (VSRL…RALL) and 793–813 (EELI…IQRD). Positions 714–764 (RLQMQLHLRGLQNSASDLRGQLQQLRNVQLQNQESVRALLKPTEADVSMRV) are interaction with SNAP25. Residues Ser911 and Ser933 each carry the phosphoserine modification. Disordered regions lie at residues 924–982 (GLDF…ERDW) and 1016–1094 (DCAS…TGEV). A Phosphothreonine modification is found at Thr951. Position 1054 is a phosphoserine (Ser1054). Residues 1069-1078 (KSPPPPPPRR) show a composition bias toward pro residues. Phosphoserine is present on residues Ser1110 and Ser1127. The interval 1155–1250 (ELESGGSSVP…FGARNSSISF (96 aa)) is disordered. Over residues 1217-1250 (PNETSSPGSEKPSGSRTSIPVLTSFGARNSSISF) the composition is skewed to polar residues.

The protein belongs to the SRCIN1 family. In terms of assembly, interacts with the N-terminal coiled-coil region of SNAP25. Interacts with BCAR1/p130Cas and SRC through its C-terminal domain. Interacts with CSK, CTTN, SORBS3/vinexin, SYP and MAPRE3/EB3. Tyrosine-phosphorylated in response to EGF and to cell adhesion to integrin ligands. Expressed predominantly in central nervous system with high levels detected in cortex, cerebellum, midbrain and spinal cord (at protein level). Also expressed in testis and epithelial-rich tissues such as mammary gland, lung and kidney.

The protein localises to the cytoplasm. Its subcellular location is the cytoskeleton. The protein resides in the cell projection. It localises to the axon. It is found in the dendrite. The protein localises to the presynapse. Its subcellular location is the postsynapse. The protein resides in the postsynaptic density. Acts as a negative regulator of SRC by activating CSK which inhibits SRC activity and downstream signaling, leading to impaired cell spreading and migration. Regulates dendritic spine morphology. Involved in calcium-dependent exocytosis. May play a role in neurotransmitter release or synapse maintenance. The polypeptide is SRC kinase signaling inhibitor 1 (Srcin1) (Mus musculus (Mouse)).